We begin with the raw amino-acid sequence, 1208 residues long: DNA-directed RNA polymerase subunit beta (1208 aa).

The protein belongs to the RNA polymerase beta chain family. The RNAP catalytic core consists of 2 alpha, 1 beta, 1 beta' and 1 omega subunit. When a sigma factor is associated with the core the holoenzyme is formed, which can initiate transcription.

It catalyses the reaction RNA(n) + a ribonucleoside 5'-triphosphate = RNA(n+1) + diphosphate. Its function is as follows. DNA-dependent RNA polymerase catalyzes the transcription of DNA into RNA using the four ribonucleoside triphosphates as substrates. This is DNA-directed RNA polymerase subunit beta from Enterococcus faecium (Streptococcus faecium).